The chain runs to 142 residues: Probable histone H2AXb (142 aa).

The segment covering 1–12 (MSSGAGSGTTKG) has biased composition (gly residues). A disordered region spans residues 1 to 28 (MSSGAGSGTTKGGRGKPKATKSVSRSSK). At S139 the chain carries Phosphoserine; by ATM and ATR. The [ST]-Q motif motif lies at 139 to 140 (SQ).

It belongs to the histone H2A family. The nucleosome is a histone octamer containing two molecules each of H2A, H2B, H3 and H4 assembled in one H3-H4 heterotetramer and two H2A-H2B heterodimers. The octamer wraps approximately 147 bp of DNA. Interacts with numerous proteins required for DNA damage signaling and repair when phosphorylated on Ser-139. Phosphorylated to form H2AXS139ph (gamma-H2AX) in response to DNA double strand breaks (DSBs) generated by exogenous genotoxic agents and by stalled replication forks, and may also occur during meiotic recombination events. Phosphorylation can extend up to several thousand nucleosomes from the actual site of the DSB and may mark the surrounding chromatin for recruitment of proteins required for DNA damage signaling and repair. Widespread phosphorylation may also serve to amplify the damage signal or aid repair of persistent lesions. H2AXS139ph in response to ionizing radiation is mediated by ATM while defects in DNA replication induce H2AXS139ph subsequent to activation of ATR. Dephosphorylation of H2AXS139ph by PP2A is required for DNA DSB repair. As to expression, expressed in meristems and dividing cells.

The protein localises to the nucleus. Its subcellular location is the chromosome. Functionally, variant histone H2A which replaces conventional H2A in a subset of nucleosomes. Nucleosomes wrap and compact DNA into chromatin, limiting DNA accessibility to the cellular machineries which require DNA as a template. Histones thereby play a central role in transcription regulation, DNA repair, DNA replication and chromosomal stability. DNA accessibility is regulated via a complex set of post-translational modifications of histones, also called histone code, and nucleosome remodeling. Required for checkpoint-mediated arrest of cell cycle progression in response to low doses of ionizing radiation and for efficient repair of DNA double strand breaks (DSBs) specifically when modified by C-terminal phosphorylation. The chain is Probable histone H2AXb from Arabidopsis thaliana (Mouse-ear cress).